The following is a 430-amino-acid chain: Serine--tRNA ligase (430 aa).

237–239 lines the L-serine pocket; it reads TAE. Residue 268–270 coordinates ATP; that stretch reads RSE. An L-serine-binding site is contributed by Glu-291. 355–358 provides a ligand contact to ATP; it reads EISS. Ser-391 is a binding site for L-serine.

The protein belongs to the class-II aminoacyl-tRNA synthetase family. Type-1 seryl-tRNA synthetase subfamily. As to quaternary structure, homodimer. The tRNA molecule binds across the dimer.

Its subcellular location is the cytoplasm. The enzyme catalyses tRNA(Ser) + L-serine + ATP = L-seryl-tRNA(Ser) + AMP + diphosphate + H(+). It carries out the reaction tRNA(Sec) + L-serine + ATP = L-seryl-tRNA(Sec) + AMP + diphosphate + H(+). It participates in aminoacyl-tRNA biosynthesis; selenocysteinyl-tRNA(Sec) biosynthesis; L-seryl-tRNA(Sec) from L-serine and tRNA(Sec): step 1/1. In terms of biological role, catalyzes the attachment of serine to tRNA(Ser). Is also able to aminoacylate tRNA(Sec) with serine, to form the misacylated tRNA L-seryl-tRNA(Sec), which will be further converted into selenocysteinyl-tRNA(Sec). This chain is Serine--tRNA ligase, found in Escherichia coli O139:H28 (strain E24377A / ETEC).